An 80-amino-acid polypeptide reads, in one-letter code: RNA-binding protein Hfq (80 aa).

In terms of domain architecture, Sm spans 10–69 (DPFLNLLRKEHVPVSIYLVNGIKLQGHIESFDQYVVLLRNTVTQMVYKHAISTVVPGRPV).

This sequence belongs to the Hfq family. Homohexamer.

In terms of biological role, RNA chaperone that binds small regulatory RNA (sRNAs) and mRNAs to facilitate mRNA translational regulation in response to envelope stress, environmental stress and changes in metabolite concentrations. Also binds with high specificity to tRNAs. In Leptothrix cholodnii (strain ATCC 51168 / LMG 8142 / SP-6) (Leptothrix discophora (strain SP-6)), this protein is RNA-binding protein Hfq.